The following is a 1125-amino-acid chain: MELSEPKQRFESLLSLFEDVANKRYSGDFSVKKNINAPQVPPRSYSLFNVTGGNVSSYNNQQQQQNNNNNNNNNNNNNNNNNNNNNNNNNNSGEISSNNSTPSILFSPTPTSTAPPAPPQPTTPPNTGFHNRPLSININQQPIGGVNNNNNNNNKDSPSNKPLRLSGSPPTASINGNQIEQLQRELRNEKEAHQQTKYLLNSFADENKKLSNDCQLWRAKYFKLLTKNTKLKVIFDHFQSIMNESDSVPGEGSLVHSTSYNSSSSSSSGGGGNITPRKLSLAGGGKFDDAPQSASALLKIHHQRNQSTGSAFSNTIYNGEEKTRDTISYNERPKRQTVGSSTFFPPPPSRATSTSSIQVNSDPQEIEQLTEEQYLEMLEKRRQVSLQILQTEKEYAFYLNIIVEEFLQPLKNESNLSNNPFISKAQVKQLFGDTEVILGSSKLLAEDLENVLLDGTSNPIGLGDCFLKICDYFKLYASYVKNYYTSISVLNKLKEESHKFQAFIQEKEQILLDSNFTDLGALLVLPVSRIGQYTSMINYLFSLTPQSHPDYEPFKKAVIKMKSTVDYVKEKIRDNDSQNKVRIIQNQMTGKFENLNLPHRRYVREGMLTESGKGSNSNQYYCFLFNDIFVLSTPIKKSNQFSFKKKISLSEAEVTMISDPEDRPIFQISIQNIDSQQDNSPNMLSLNGIQNAINNMTNNDSKSKNNNNNNSNGNNNNNNINSNSNSNNNSVIDIKSSGVLINNGGGSGFISNNNGITNVNSNNNNNNNINSNNNINGNNNNGNNSVNYSNGEDNNDRECFTFIADSNRDREDWIQAIHANIISSKKRNETRKPEDIEKGGIDFSVSDIKLCEQIGSGGSGCTVHRCTVDGFTCAVKVLKLKNTSPFLVEQFISEITIMVKLSHQNIAKYLGHRLSGNQLWLFMEFYPHSLKDVITKRTSPFPATEVIWMALEIAKGLEFLHTQKNPIIHRDLKPGNIMCSLDDKGRVCSIRVCDFDTSKELGNGVTLKTCIGTPCYMAAEVLNVADGGNSGYSLKADIWSFAMLCFEIISLLPPYHQFQHLQSIEMIINGTCPPLPTDLIQPKLLQPLIELLVTCIDLNPNHRPNASQLVQKLTKMLKNTGMMTE.

Disordered stretches follow at residues 50–175, 247–287, and 322–362; these read VTGG…ASIN, SVPG…GGKF, and KTRD…VNSD. Residues 59 to 91 show a composition bias toward low complexity; it reads NNQQQQQNNNNNNNNNNNNNNNNNNNNNNNNNN. The segment covering 92–106 has biased composition (polar residues); that stretch reads SGEISSNNSTPSILF. Positions 113–124 are enriched in pro residues; that stretch reads TAPPAPPQPTTP. Low complexity predominate over residues 137–161; it reads NINQQPIGGVNNNNNNNNKDSPSNK. The region spanning 380–571 is the DH domain; sequence KRRQVSLQIL…KSTVDYVKEK (192 aa). Residues 601-822 enclose the PH domain; sequence RYVREGMLTE…WIQAIHANII (222 aa). 2 disordered regions span residues 693–729 and 761–791; these read INNMTNNDSKSKNNNNNNSNGNNNNNNINSNSNSNNN and SNNNNNNNINSNNNINGNNNNGNNSVNYSNG. Over residues 694–729 the composition is skewed to low complexity; the sequence is NNMTNNDSKSKNNNNNNSNGNNNNNNINSNSNSNNN. Residues 848–1117 enclose the Protein kinase domain; sequence IKLCEQIGSG…QLVQKLTKML (270 aa). ATP contacts are provided by residues 854 to 862 and Lys876; that span reads IGSGGSGCT. The active-site Proton acceptor is Asp971.

This sequence belongs to the protein kinase superfamily. STE Ser/Thr protein kinase family. It depends on Mg(2+) as a cofactor.

It carries out the reaction L-seryl-[protein] + ATP = O-phospho-L-seryl-[protein] + ADP + H(+). It catalyses the reaction L-threonyl-[protein] + ATP = O-phospho-L-threonyl-[protein] + ADP + H(+). In Dictyostelium discoideum (Social amoeba), this protein is Kinase and exchange factor for Rac B.